A 292-amino-acid polypeptide reads, in one-letter code: 33 kDa chaperonin (292 aa).

Intrachain disulfides connect Cys-230–Cys-232 and Cys-263–Cys-266.

Belongs to the HSP33 family. Under oxidizing conditions two disulfide bonds are formed involving the reactive cysteines. Under reducing conditions zinc is bound to the reactive cysteines and the protein is inactive.

The protein localises to the cytoplasm. Functionally, redox regulated molecular chaperone. Protects both thermally unfolding and oxidatively damaged proteins from irreversible aggregation. Plays an important role in the bacterial defense system toward oxidative stress. This Salmonella typhimurium (strain LT2 / SGSC1412 / ATCC 700720) protein is 33 kDa chaperonin.